Here is a 104-residue protein sequence, read N- to C-terminus: Probable monothiol glutaredoxin 2 (104 aa).

A Glutaredoxin domain is found at F7 to G104. Position 24 (K24) interacts with glutathione. C32 contributes to the [2Fe-2S] cluster binding site. Residues R61, F73, and C86–D87 contribute to the glutathione site.

Belongs to the glutaredoxin family. Monothiol subfamily.

In Rickettsia felis (strain ATCC VR-1525 / URRWXCal2) (Rickettsia azadi), this protein is Probable monothiol glutaredoxin 2 (grxC2).